Consider the following 587-residue polypeptide: Glutamine--tRNA ligase (587 aa).

Residues 58–68 (PEPNGYLHIGH) carry the 'HIGH' region motif. ATP-binding positions include 59-61 (EPN) and 65-71 (HIGHAKS). Residues aspartate 91 and tyrosine 240 each coordinate L-glutamine. ATP is bound by residues threonine 259 and 294–295 (RL). A 'KMSKS' region motif is present at residues 301-305 (VTSKR).

Belongs to the class-I aminoacyl-tRNA synthetase family. As to quaternary structure, monomer.

Its subcellular location is the cytoplasm. The enzyme catalyses tRNA(Gln) + L-glutamine + ATP = L-glutaminyl-tRNA(Gln) + AMP + diphosphate. The protein is Glutamine--tRNA ligase of Bordetella pertussis (strain Tohama I / ATCC BAA-589 / NCTC 13251).